The chain runs to 438 residues: 2-(3-amino-3-carboxypropyl)histidine synthase subunit 1 (438 aa).

The segment at Met-1–Ser-24 is disordered. 3 residues coordinate [4Fe-4S] cluster: Cys-110, Cys-214, and Cys-342. A disordered region spans residues Leu-402–Pro-438. Ser-418 is subject to Phosphoserine.

It belongs to the DPH1/DPH2 family. DPH1 subfamily. As to quaternary structure, component of the 2-(3-amino-3-carboxypropyl)histidine synthase complex composed of DPH1, DPH2, DPH3 and a NADH-dependent reductase. Interacts with DPH2. Interacts with RBM8A. [4Fe-4S] cluster serves as cofactor. Strongly expressed in kidney and liver. Moderately expressed in brain, skin and testis. Weakly expressed in heart, lung, small intestine, spleen, stomach and thymus.

The protein resides in the nucleus. It is found in the cytoplasm. It carries out the reaction L-histidyl-[translation elongation factor 2] + S-adenosyl-L-methionine = 2-[(3S)-amino-3-carboxypropyl]-L-histidyl-[translation elongation factor 2] + S-methyl-5'-thioadenosine + H(+). The protein operates within protein modification; peptidyl-diphthamide biosynthesis. Functionally, catalyzes the first step of diphthamide biosynthesis, a post-translational modification of histidine which occurs in elongation factor 2. DPH1 and DPH2 transfer a 3-amino-3-carboxypropyl (ACP) group from S-adenosyl-L-methionine (SAM) to a histidine residue, the reaction is assisted by a reduction system comprising DPH3 and a NADH-dependent reductase. Acts as a tumor suppressor. In Mus musculus (Mouse), this protein is 2-(3-amino-3-carboxypropyl)histidine synthase subunit 1.